A 246-amino-acid polypeptide reads, in one-letter code: Small ribosomal subunit protein uS2 (246 aa).

This sequence belongs to the universal ribosomal protein uS2 family.

This is Small ribosomal subunit protein uS2 from Chromohalobacter salexigens (strain ATCC BAA-138 / DSM 3043 / CIP 106854 / NCIMB 13768 / 1H11).